Here is a 244-residue protein sequence, read N- to C-terminus: Probable transcriptional regulatory protein MMOB1910 (244 aa).

The protein belongs to the TACO1 family.

Its subcellular location is the cytoplasm. The chain is Probable transcriptional regulatory protein MMOB1910 from Mycoplasma mobile (strain ATCC 43663 / 163K / NCTC 11711) (Mesomycoplasma mobile).